The sequence spans 242 residues: Octanoyltransferase (242 aa).

Positions Ser-31–Gln-206 constitute a BPL/LPL catalytic domain. Substrate contacts are provided by residues Arg-70–His-77, Ser-137–Gly-139, and Gly-150–Ala-152. Cys-168 serves as the catalytic Acyl-thioester intermediate.

Belongs to the LipB family.

The protein resides in the cytoplasm. It catalyses the reaction octanoyl-[ACP] + L-lysyl-[protein] = N(6)-octanoyl-L-lysyl-[protein] + holo-[ACP] + H(+). It functions in the pathway protein modification; protein lipoylation via endogenous pathway; protein N(6)-(lipoyl)lysine from octanoyl-[acyl-carrier-protein]: step 1/2. Catalyzes the transfer of endogenously produced octanoic acid from octanoyl-acyl-carrier-protein onto the lipoyl domains of lipoate-dependent enzymes. Lipoyl-ACP can also act as a substrate although octanoyl-ACP is likely to be the physiological substrate. The protein is Octanoyltransferase of Coxiella burnetii (strain Dugway 5J108-111).